The chain runs to 320 residues: Polyprenal reductase 1 (320 aa).

Helical transmembrane passes span 5–25 (IVWLVKAAWITVWIVSILPLV), 64–84 (FFGHFYVVGVVWTTLLLAATW), 143–163 (MHILAYVGALFYYVAAPLSLC), 200–220 (PLMKLGSLQWIGGAIFLWGWI), 243–263 (IIPYGDWFEMVSCPHFLAEIV), and 266–286 (LGLLISSGGTDISIWLLFGFV).

Belongs to the steroid 5-alpha reductase family. Polyprenal reductase subfamily. In terms of tissue distribution, expressed in roots and flowers.

It localises to the cell membrane. The catalysed reaction is a di-trans,poly-cis-dolichal + NADP(+) = a di-trans,poly-cis-polyprenal + NADPH + H(+). It participates in protein modification; protein glycosylation. Its function is as follows. Plays a key role in early steps of protein N-linked glycosylation by being involved in the conversion of polyprenol into dolichol. Acts as a polyprenal reductase that mediates the reduction of polyprenal into dolichal in a NADP-dependent mechanism. Dolichols are required for the synthesis of dolichol-linked monosaccharides and the oligosaccharide precursor used for N-glycosylation. Involved in the regulation of plant growth and reproductive processes. The polypeptide is Polyprenal reductase 1 (Arabidopsis thaliana (Mouse-ear cress)).